An 869-amino-acid chain; its full sequence is Leucine--tRNA ligase (869 aa).

The short motif at 42–52 is the 'HIGH' region element; sequence PYPSGNLHMGH. The 'KMSKS' region motif lies at 622-626; that stretch reads KMSKS. K625 is a binding site for ATP.

It belongs to the class-I aminoacyl-tRNA synthetase family.

The protein localises to the cytoplasm. It catalyses the reaction tRNA(Leu) + L-leucine + ATP = L-leucyl-tRNA(Leu) + AMP + diphosphate. The chain is Leucine--tRNA ligase from Synechocystis sp. (strain ATCC 27184 / PCC 6803 / Kazusa).